Reading from the N-terminus, the 478-residue chain is MVWIQRRRLLASCLCITATVFLLVTLQVVVELGKFERKKFKNSDLRAGHAKMEEEPVHLYPLPGKEALILKRKNQLETDSYPIMLWWSPLTGETGRLGQCGADECFFTINRTYLHHPMTKAFLFYGTDFNIDSLPLPRKAHHDWALFHEESPKNNYKLFHKPVITLFNYTATFSRHSHLPLTTQYLEGVEVLKSLRYLVPLRSKNNLRRRLAPLVYIQSDCDPPSDRDSYVRELMTYIEVDSYGECLRNKDLPQQLKNPASMDADGFYRIIAQYKFILAFENAVCDDYITEKFWRPLKLGVVPVYYGSPSIADWLPSNRSAILVSEFAHPRELANYIRQLDHDDRMYEAYIEWKLKGEVSNQRLLTALRERKWGVQDVHQDNYIDAFECMVCTKVWDNIRLQEKGLPPKRWKADVSHLSCPEPAVFAFSPLAPRWSSLREMWIPSFEQSKKEAQALRWLVDRNKNFSAQEFWALVFKD.

The Cytoplasmic segment spans residues 1 to 8 (MVWIQRRR). A helical; Signal-anchor for type II membrane protein transmembrane segment spans residues 9 to 31 (LLASCLCITATVFLLVTLQVVVE). The Lumenal portion of the chain corresponds to 32-478 (LGKFERKKFK…QEFWALVFKD (447 aa)). Asparagine 110 and asparagine 168 each carry an N-linked (GlcNAc...) asparagine glycan. Cysteines 389 and 392 form a disulfide.

Belongs to the glycosyltransferase 10 family.

The protein resides in the endoplasmic reticulum membrane. The catalysed reaction is L-threonyl-[protein] + GDP-beta-L-fucose = 3-O-(alpha-L-fucosyl)-L-threonyl-[protein] + GDP + H(+). The enzyme catalyses L-seryl-[protein] + GDP-beta-L-fucose = 3-O-(alpha-L-fucosyl)-L-seryl-[protein] + GDP + H(+). The protein operates within protein modification; protein glycosylation. Its function is as follows. Protein O-fucosyltransferase that specifically catalyzes O-fucosylation of serine or threonine residues in EMI domains of target proteins, such as MMRN1, MMRN2 and EMID1. Attaches fucose through an O-glycosidic linkage. O-fucosylation of EMI domain-containing proteins may be required for facilitating protein folding and secretion. May also show alpha-(1,3)-fucosyltransferase activity toward the innermost N-acetyl glucosamine (GlcNAc) residue in biantennary N-glycan acceptors. However, this was tested with a library of synthetic substrates and this activity is unsure in vivo. May be involved in biosynthesis of Lewis X-carrying biantennary N-glycans that regulate neuron stem cell self-renewal during brain development. The protein is GDP-fucose protein O-fucosyltransferase 3 (FUT10) of Canis lupus familiaris (Dog).